The chain runs to 215 residues: MNRSSNSAFAPTEKKLGLYPVVDSIEWVERLLKIGVTTIQLRIKDKQPKDVEQDIITAIKLGRKYNARLFINDYWQLAIKHHAYGVHLGQEDLDIADLDAIKQSGLCLGISTHNDTELQRAKRLLPSYIALGHIFPTTTKDMPSKPQGLRALKHQVEQTHDFPTVAIGGISLEKVSDVVATGVGGVALVSAITKASDWQQVTLKLLELVEGKPSC.

4-amino-2-methyl-5-(diphosphooxymethyl)pyrimidine is bound by residues 40-44 (QLRIK) and asparagine 72. Mg(2+)-binding residues include aspartate 73 and aspartate 92. Serine 111 is a 4-amino-2-methyl-5-(diphosphooxymethyl)pyrimidine binding site. Residue 137 to 139 (TTT) coordinates 2-[(2R,5Z)-2-carboxy-4-methylthiazol-5(2H)-ylidene]ethyl phosphate. Lysine 140 is a 4-amino-2-methyl-5-(diphosphooxymethyl)pyrimidine binding site. Residues glycine 169 and 189 to 190 (VS) contribute to the 2-[(2R,5Z)-2-carboxy-4-methylthiazol-5(2H)-ylidene]ethyl phosphate site.

Belongs to the thiamine-phosphate synthase family. The cofactor is Mg(2+).

It catalyses the reaction 2-[(2R,5Z)-2-carboxy-4-methylthiazol-5(2H)-ylidene]ethyl phosphate + 4-amino-2-methyl-5-(diphosphooxymethyl)pyrimidine + 2 H(+) = thiamine phosphate + CO2 + diphosphate. The enzyme catalyses 2-(2-carboxy-4-methylthiazol-5-yl)ethyl phosphate + 4-amino-2-methyl-5-(diphosphooxymethyl)pyrimidine + 2 H(+) = thiamine phosphate + CO2 + diphosphate. The catalysed reaction is 4-methyl-5-(2-phosphooxyethyl)-thiazole + 4-amino-2-methyl-5-(diphosphooxymethyl)pyrimidine + H(+) = thiamine phosphate + diphosphate. Its pathway is cofactor biosynthesis; thiamine diphosphate biosynthesis; thiamine phosphate from 4-amino-2-methyl-5-diphosphomethylpyrimidine and 4-methyl-5-(2-phosphoethyl)-thiazole: step 1/1. Condenses 4-methyl-5-(beta-hydroxyethyl)thiazole monophosphate (THZ-P) and 2-methyl-4-amino-5-hydroxymethyl pyrimidine pyrophosphate (HMP-PP) to form thiamine monophosphate (TMP). The sequence is that of Thiamine-phosphate synthase from Proteus mirabilis (strain HI4320).